A 152-amino-acid chain; its full sequence is Ribonuclease pancreatic beta-type (152 aa).

A signal peptide spans Met1 to Ser25. Residues Ser25–Tyr53 form a disordered region. The span at Glu27–Ser45 shows a compositional bias: basic and acidic residues. Residues Lys35 and Arg38 each contribute to the substrate site. His40 functions as the Proton acceptor in the catalytic mechanism. Disulfide bonds link Cys54–Cys112, Cys68–Cys123, Cys86–Cys138, and Cys93–Cys100. Substrate is bound by residues Lys69–Thr73 and Lys94. His147 serves as the catalytic Proton donor.

The protein belongs to the pancreatic ribonuclease family. Monomer.

Its subcellular location is the secreted. It carries out the reaction an [RNA] containing cytidine + H2O = an [RNA]-3'-cytidine-3'-phosphate + a 5'-hydroxy-ribonucleotide-3'-[RNA].. It catalyses the reaction an [RNA] containing uridine + H2O = an [RNA]-3'-uridine-3'-phosphate + a 5'-hydroxy-ribonucleotide-3'-[RNA].. In terms of biological role, endonuclease that catalyzes the cleavage of RNA on the 3' side of pyrimidine nucleotides. Acts on single-stranded and double-stranded RNA. The protein is Ribonuclease pancreatic beta-type of Rattus tiomanicus (Malayan field rat).